Reading from the N-terminus, the 227-residue chain is Cytochrome c oxidase subunit 2 (227 aa).

At 1–14 (MAHAAQVGLQDATS) the chain is on the mitochondrial intermembrane side. A helical transmembrane segment spans residues 15 to 45 (PIMEELIIFHDHALMIIFLICFLVLYALFLT). The Mitochondrial matrix portion of the chain corresponds to 46-59 (LTTKLTNTSISDAQ). A helical transmembrane segment spans residues 60 to 87 (EMETVWTILPAIILVLIALPSLRILYMT). Residues 88-227 (DEVNDPSFTI…IFEMGPVFTL (140 aa)) lie on the Mitochondrial intermembrane side of the membrane. Cu cation is bound by residues His-161, Cys-196, Glu-198, Cys-200, His-204, and Met-207. A Mg(2+)-binding site is contributed by Glu-198.

The protein belongs to the cytochrome c oxidase subunit 2 family. In terms of assembly, component of the cytochrome c oxidase (complex IV, CIV), a multisubunit enzyme composed of 14 subunits. The complex is composed of a catalytic core of 3 subunits MT-CO1, MT-CO2 and MT-CO3, encoded in the mitochondrial DNA, and 11 supernumerary subunits COX4I, COX5A, COX5B, COX6A, COX6B, COX6C, COX7A, COX7B, COX7C, COX8 and NDUFA4, which are encoded in the nuclear genome. The complex exists as a monomer or a dimer and forms supercomplexes (SCs) in the inner mitochondrial membrane with NADH-ubiquinone oxidoreductase (complex I, CI) and ubiquinol-cytochrome c oxidoreductase (cytochrome b-c1 complex, complex III, CIII), resulting in different assemblies (supercomplex SCI(1)III(2)IV(1) and megacomplex MCI(2)III(2)IV(2)). Found in a complex with TMEM177, COA6, COX18, COX20, SCO1 and SCO2. Interacts with TMEM177 in a COX20-dependent manner. Interacts with COX20. Interacts with COX16. Cu cation serves as cofactor.

The protein resides in the mitochondrion inner membrane. It catalyses the reaction 4 Fe(II)-[cytochrome c] + O2 + 8 H(+)(in) = 4 Fe(III)-[cytochrome c] + 2 H2O + 4 H(+)(out). In terms of biological role, component of the cytochrome c oxidase, the last enzyme in the mitochondrial electron transport chain which drives oxidative phosphorylation. The respiratory chain contains 3 multisubunit complexes succinate dehydrogenase (complex II, CII), ubiquinol-cytochrome c oxidoreductase (cytochrome b-c1 complex, complex III, CIII) and cytochrome c oxidase (complex IV, CIV), that cooperate to transfer electrons derived from NADH and succinate to molecular oxygen, creating an electrochemical gradient over the inner membrane that drives transmembrane transport and the ATP synthase. Cytochrome c oxidase is the component of the respiratory chain that catalyzes the reduction of oxygen to water. Electrons originating from reduced cytochrome c in the intermembrane space (IMS) are transferred via the dinuclear copper A center (CU(A)) of subunit 2 and heme A of subunit 1 to the active site in subunit 1, a binuclear center (BNC) formed by heme A3 and copper B (CU(B)). The BNC reduces molecular oxygen to 2 water molecules using 4 electrons from cytochrome c in the IMS and 4 protons from the mitochondrial matrix. The protein is Cytochrome c oxidase subunit 2 (MT-CO2) of Pan troglodytes (Chimpanzee).